The chain runs to 209 residues: Phosphoheptose isomerase (209 aa).

The 160-residue stretch at 50 to 209 folds into the SIS domain; sequence IADTFREGGK…ELVEKMMGYD (160 aa). 65–67 is a binding site for substrate; the sequence is NGG. His74 and Glu78 together coordinate Zn(2+). Residues Glu78, 109 to 110, 135 to 137, Ser140, and Gln188 contribute to the substrate site; these read ND and STS. 2 residues coordinate Zn(2+): Gln188 and His196.

This sequence belongs to the SIS family. GmhA subfamily. Zn(2+) is required as a cofactor.

It localises to the cytoplasm. It carries out the reaction 2 D-sedoheptulose 7-phosphate = D-glycero-alpha-D-manno-heptose 7-phosphate + D-glycero-beta-D-manno-heptose 7-phosphate. The protein operates within carbohydrate biosynthesis; D-glycero-D-manno-heptose 7-phosphate biosynthesis; D-glycero-alpha-D-manno-heptose 7-phosphate and D-glycero-beta-D-manno-heptose 7-phosphate from sedoheptulose 7-phosphate: step 1/1. In terms of biological role, catalyzes the isomerization of sedoheptulose 7-phosphate in D-glycero-D-manno-heptose 7-phosphate. The polypeptide is Phosphoheptose isomerase (Chlorobaculum tepidum (strain ATCC 49652 / DSM 12025 / NBRC 103806 / TLS) (Chlorobium tepidum)).